Reading from the N-terminus, the 200-residue chain is Pyridoxal phosphate homeostasis protein (200 aa).

An N6-(pyridoxal phosphate)lysine modification is found at K11.

Belongs to the pyridoxal phosphate-binding protein YggS/PROSC family. As to quaternary structure, monomer.

Its function is as follows. Pyridoxal 5'-phosphate (PLP)-binding protein, which is involved in PLP homeostasis. The protein is Pyridoxal phosphate homeostasis protein of Buchnera aphidicola subsp. Acyrthosiphon pisum (strain APS) (Acyrthosiphon pisum symbiotic bacterium).